Reading from the N-terminus, the 138-residue chain is Translation initiation factor 2 subunit beta (138 aa).

The protein belongs to the eIF-2-beta/eIF-5 family. Heterotrimer composed of an alpha, a beta and a gamma chain.

Functionally, eIF-2 functions in the early steps of protein synthesis by forming a ternary complex with GTP and initiator tRNA. This is Translation initiation factor 2 subunit beta from Methanopyrus kandleri (strain AV19 / DSM 6324 / JCM 9639 / NBRC 100938).